A 285-amino-acid polypeptide reads, in one-letter code: Probable glucose uptake protein GlcU (285 aa).

10 helical membrane-spanning segments follow: residues Phe-4–Val-21, Gly-26–Phe-48, Val-52–Gly-71, Val-84–Val-106, Trp-110–Leu-132, Ile-153–Val-175, Ala-180–Phe-197, Ile-210–Gln-227, Val-232–Leu-254, and Ile-266–Ala-283.

It belongs to the GRP transporter (TC 2.A.7.5) family.

It is found in the cell membrane. In terms of biological role, involved in the uptake of glucose. This Bacillus anthracis protein is Probable glucose uptake protein GlcU (glcU).